The following is a 266-amino-acid chain: Type III pantothenate kinase (266 aa).

9-16 (DAGNSRIK) serves as a coordination point for ATP. Substrate is bound by residues tyrosine 96 and 103–106 (GSDR). Aspartate 105 serves as the catalytic Proton acceptor. Threonine 129 provides a ligand contact to ATP. Threonine 189 provides a ligand contact to substrate.

The protein belongs to the type III pantothenate kinase family. As to quaternary structure, homodimer. Requires NH4(+) as cofactor. The cofactor is K(+).

It is found in the cytoplasm. It catalyses the reaction (R)-pantothenate + ATP = (R)-4'-phosphopantothenate + ADP + H(+). The protein operates within cofactor biosynthesis; coenzyme A biosynthesis; CoA from (R)-pantothenate: step 1/5. Its function is as follows. Catalyzes the phosphorylation of pantothenate (Pan), the first step in CoA biosynthesis. In Burkholderia lata (strain ATCC 17760 / DSM 23089 / LMG 22485 / NCIMB 9086 / R18194 / 383), this protein is Type III pantothenate kinase.